We begin with the raw amino-acid sequence, 126 residues long: Protein ApaG (126 aa).

Positions 2-126 (SDPRYQIDVS…FRLAVPGALH (125 aa)) constitute an ApaG domain.

This is Protein ApaG from Azotobacter vinelandii (strain DJ / ATCC BAA-1303).